Consider the following 276-residue polypeptide: 6-chlorohydroxyquinol 1,2-dioxygenase (276 aa).

The Fe cation site is built by tyrosine 157, tyrosine 191, histidine 215, and histidine 217.

Belongs to the intradiol ring-cleavage dioxygenase family. It depends on Fe(3+) as a cofactor.

Its pathway is aromatic compound metabolism. The protein operates within xenobiotic degradation. Functionally, involved in the degradation of 2,4,6-trichlorophenol (2,4,6-TCP). May catalyze the oxidation of 6-chlorohydroxyquinol (6-CHQ) to 2-chloromaleylacetate (2-CMA). This chain is 6-chlorohydroxyquinol 1,2-dioxygenase, found in Cupriavidus pinatubonensis (strain JMP 134 / LMG 1197) (Cupriavidus necator (strain JMP 134)).